We begin with the raw amino-acid sequence, 678 residues long: Growth arrest-specific protein 6 (678 aa).

The first 30 residues, 1 to 30 (MAPSLSPGPAALRRAPQLLLLLLAAECALA), serve as a signal peptide directing secretion. Residues 53 to 94 (FEEAKQGHLERECVEELCSREEAREVFENDPETDYFYPRYLD) enclose the Gla domain. Cysteines 65 and 70 form a disulfide. Ser-71 is subject to Phosphoserine; by FAM20C. In terms of domain architecture, EGF-like 1; calcium-binding spans 116–154 (LPDQCTPNPCDRKGTQACQDLMGNFFCLCKAGWGGRLCD). 14 disulfides stabilise this stretch: Cys-120–Cys-133, Cys-125–Cys-142, Cys-144–Cys-153, Cys-160–Cys-171, Cys-167–Cys-180, Cys-182–Cys-195, Cys-201–Cys-212, Cys-207–Cys-221, Cys-223–Cys-236, Cys-242–Cys-251, Cys-247–Cys-260, Cys-262–Cys-277, Cys-283–Cys-570, and Cys-444–Cys-470. An EGF-like 2; calcium-binding domain is found at 156 to 196 (DVNECSQENGGCLQICHNKPGSFHCSCHSGFELSSDGRTCQ). The EGF-like 3; calcium-binding domain occupies 197-237 (DIDECADSEACGEARCKNLPGSYSCLCDEGFAYSSQEKACR). Positions 238-278 (DVDECLQGRCEQVCVNSPGSYTCHCDGRGGLKLSQDMDTCE) constitute an EGF-like 4; calcium-binding domain. 2 consecutive Laminin G-like domains span residues 298–470 (GRMF…RMQC) and 477–670 (GSFY…AHSC). 2 residues coordinate Ca(2+): Asp-329 and Glu-331. Asn-420 carries N-linked (GlcNAc...) asparagine glycosylation. Arg-440 is a binding site for Ca(2+). Thr-621 and Thr-637 each carry phosphothreonine. The residue at position 640 (Tyr-640) is a Phosphotyrosine. Cys-643 and Cys-670 are joined by a disulfide. Asp-656 serves as a coordination point for Ca(2+).

As to quaternary structure, heterodimer and heterotetramer with AXL. Post-translationally, proteolytically processed after secretion to yield a N-terminal 36 kDa protein and a C-terminal 50 kDa protein including the laminin G-like domains which activates AXL. Gamma-carboxyglutamate residues are formed by vitamin K dependent carboxylation. These residues are essential for the binding of calcium. In terms of tissue distribution, plasma. Isoform 1 and isoform 2 are widely expressed, isoform 1 being expressed at higher levels than isoform 2 in most tissues. Isoform 2 is the predominant form in spleen.

It localises to the secreted. Its function is as follows. Ligand for tyrosine-protein kinase receptors AXL, TYRO3 and MER whose signaling is implicated in cell growth and survival, cell adhesion and cell migration. GAS6/AXL signaling plays a role in various processes such as endothelial cell survival during acidification by preventing apoptosis, optimal cytokine signaling during human natural killer cell development, hepatic regeneration, gonadotropin-releasing hormone neuron survival and migration, platelet activation, or regulation of thrombotic responses. (Microbial infection) Can bridge virus envelope phosphatidylserine to the TAM receptor tyrosine kinase Axl to mediate viral entry by apoptotic mimicry. Plays a role in Dengue cell entry by apoptotic mimicry. Plays a role in Vaccinia virus cell entry by apoptotic mimicry. Plays a role in ebolavirus and marburgvirus cell entry by apoptotic mimicry. The chain is Growth arrest-specific protein 6 from Homo sapiens (Human).